The primary structure comprises 228 residues: 2,3-bisphosphoglycerate-dependent phosphoglycerate mutase (228 aa).

Residues 8–15 (RHGQSEWN), 21–22 (TG), arginine 60, 87–90 (ERHY), lysine 98, 114–115 (RR), and 183–184 (GN) each bind substrate. Histidine 9 serves as the catalytic Tele-phosphohistidine intermediate. Glutamate 87 acts as the Proton donor/acceptor in catalysis.

This sequence belongs to the phosphoglycerate mutase family. BPG-dependent PGAM subfamily.

The catalysed reaction is (2R)-2-phosphoglycerate = (2R)-3-phosphoglycerate. It participates in carbohydrate degradation; glycolysis; pyruvate from D-glyceraldehyde 3-phosphate: step 3/5. Functionally, catalyzes the interconversion of 2-phosphoglycerate and 3-phosphoglycerate. In Staphylococcus aureus (strain Mu3 / ATCC 700698), this protein is 2,3-bisphosphoglycerate-dependent phosphoglycerate mutase.